Consider the following 476-residue polypeptide: Probable serine carboxypeptidase CPVL (476 aa).

The signal sequence occupies residues 1-22 (MVGTMWKVIVSLVLLMPGSCDG). N-linked (GlcNAc...) asparagine glycosylation is found at Asn81 and Asn132. Residue Ser204 is part of the active site. Residues Asn307 and Asn346 are each glycosylated (N-linked (GlcNAc...) asparagine). Active-site residues include Asp388 and His448.

It belongs to the peptidase S10 family.

In terms of biological role, may be involved in the digestion of phagocytosed particles in the lysosome, participation in an inflammatory protease cascade, and trimming of peptides for antigen presentation. This Pongo abelii (Sumatran orangutan) protein is Probable serine carboxypeptidase CPVL (CPVL).